We begin with the raw amino-acid sequence, 468 residues long: UDP-N-acetylmuramate--L-alanine ligase (468 aa).

112 to 118 is a binding site for ATP; it reads GTHGKTT.

The protein belongs to the MurCDEF family.

Its subcellular location is the cytoplasm. It catalyses the reaction UDP-N-acetyl-alpha-D-muramate + L-alanine + ATP = UDP-N-acetyl-alpha-D-muramoyl-L-alanine + ADP + phosphate + H(+). It functions in the pathway cell wall biogenesis; peptidoglycan biosynthesis. Functionally, cell wall formation. The protein is UDP-N-acetylmuramate--L-alanine ligase of Bordetella bronchiseptica (strain ATCC BAA-588 / NCTC 13252 / RB50) (Alcaligenes bronchisepticus).